The chain runs to 599 residues: Riboflavin biosynthesis protein PYRR, chloroplastic (599 aa).

A chloroplast-targeting transit peptide spans 1–17; the sequence is MALSFRISSSSPLICRA. A CMP/dCMP-type deaminase domain is found at 30 to 152; that stretch reads TTDAAFIRRA…ELRSHGIEVN (123 aa).

In the C-terminal section; belongs to the YbiA family.

Its subcellular location is the plastid. It is found in the chloroplast. It catalyses the reaction 5-amino-6-(5-phospho-D-ribitylamino)uracil + NADP(+) = 5-amino-6-(5-phospho-D-ribosylamino)uracil + NADPH + H(+). The enzyme catalyses 2,5-diamino-6-hydroxy-4-(5-phosphoribosylamino)-pyrimidine + H2O = 2,5,6-triamino-4-hydroxypyrimidine + D-ribose 5-phosphate. The catalysed reaction is 5-amino-6-(5-phospho-D-ribosylamino)uracil + H2O = 5,6-diaminouracil + D-ribose 5-phosphate. It participates in cofactor biosynthesis; riboflavin biosynthesis; 5-amino-6-(D-ribitylamino)uracil from GTP: step 3/4. Functionally, pyrimidine reductase involved in the riboflavin biosynthesis pathway. Also has a non-functional N-terminal deaminase domain that lacks the catalytically essential zinc-binding residues. Its function is as follows. Catalyzes the hydrolysis of the N-glycosidic bond in the first two intermediates of riboflavin biosynthesis, which are highly reactive metabolites, yielding relatively innocuous products. Thus, can divert a surplus of harmful intermediates into relatively harmless products and pre-empt the damage these intermediates would otherwise do. Helps maintain flavin levels. Has no activity against GTP, nucleoside monophosphates or ADP-ribose. This chain is Riboflavin biosynthesis protein PYRR, chloroplastic (PYRR), found in Arabidopsis thaliana (Mouse-ear cress).